The primary structure comprises 1196 residues: Jouberin (1196 aa).

Positions 13–45 (KVRFEELLKTHSDLMREKKKLKKKLVRSEENIS) form a coiled coil. Position 45 is a phosphoserine (Ser45). 3 disordered regions span residues 56–186 (MKET…EEDE), 215–242 (QLTY…KEVP), and 254–327 (ISGD…HEIT). Over residues 80–91 (DDVSAANTNNLK) the composition is skewed to polar residues. Residues 92–101 (KSTRVTKNKL) show a composition bias toward basic residues. A compositionally biased stretch (polar residues) spans 102–113 (RNTQLATENPNG). Basic and acidic residues-rich tracts occupy residues 141-154 (LKPE…DSTH), 166-179 (DHQK…GREE), and 224-233 (LFHDDKLSSE). Positions 141–434 (LKPETPENKV…VFNENFPYLL (294 aa)) are interaction with HAP1. The segment covering 300–309 (KPKKTKKKTK) has biased composition (basic residues). WD repeat units lie at residues 607–649 (AGER…FMRE), 652–691 (GHLN…TNTF), 695–735 (PHPS…DSAI), 742–781 (VHKS…NDLE), 797–837 (EFKG…ARKF), 841–880 (ANYR…QVAM), and 885–926 (PFKS…AQQE). At Ser1002 the chain carries Phosphoserine. An SH3 domain is found at 1051–1111 (DTAPTVVALY…PANHVASETL (61 aa)). Residues 1115 to 1196 (LPPEIKERSP…QAGRKVTLIE (82 aa)) form a disordered region. 2 stretches are compositionally biased toward basic and acidic residues: residues 1117–1136 (PEIK…KIEK) and 1161–1182 (THSE…DTRM). Ser1123 carries the post-translational modification Phosphoserine.

As to quaternary structure, self-associates. Part of the tectonic-like complex (also named B9 complex). Interacts with MKS1. Interacts with NPHP1; probably as heterodimers and/or AHI1(2):NPHP1(2) heterotetramers. Interacts (via SH3 domain) with the dynamin GTPase DNM2. Interacts with HAP1; probably as AHI1(2):HAP1(2) heterotetramers. Interacts with RAB8A. Interacts with CEND1. Interacts with CTNNB1/beta-catenin. Interacts with SPATA7. Highly expressed in the most primitive normal hematopoietic cells. Expressed in brain, particularly in neurons that give rise to the crossing axons of the corticospinal tract and superior cerebellar peduncles. Expressed in kidney (renal collecting duct cells) (at protein level).

The protein resides in the cytoplasm. Its subcellular location is the cytoskeleton. It localises to the cilium basal body. The protein localises to the cell junction. It is found in the adherens junction. The protein resides in the microtubule organizing center. Its subcellular location is the centrosome. It localises to the centriole. Involved in vesicle trafficking and required for ciliogenesis, formation of primary non-motile cilium, and recruitment of RAB8A to the basal body of primary cilium. Component of the tectonic-like complex, a complex localized at the transition zone of primary cilia and acting as a barrier that prevents diffusion of transmembrane proteins between the cilia and plasma membranes. Involved in neuronal differentiation. As a positive modulator of classical Wnt signaling, may play a crucial role in ciliary signaling during cerebellum embryonic development. The sequence is that of Jouberin (AHI1) from Homo sapiens (Human).